A 586-amino-acid polypeptide reads, in one-letter code: Regulatory protein NPR3 (586 aa).

Phosphoserine is present on S10. A BTB domain is found at 60-135; sequence SDAEIIVDGV…IYTGRLKPFP (76 aa). The segment at 138–152 adopts a C2HC NPR-type zinc-finger fold; the sequence is VSTCVDPVCSHDCCR. Zn(2+) contacts are provided by C141, C146, H148, and C151. 3 ANK repeats span residues 261 to 291, 293 to 320, and 324 to 353; these read ERIG…TLDQ, NGLH…DVNY, and RGYT…NASE. A salicylic acid-binding core (SBC) region spans residues 383 to 523; the sequence is ESSKARLCID…MAEYIDDDIL (141 aa). R428 is a binding site for salicylate. The segment at 554–586 is disordered; that stretch reads YSKDKESKIARSCLSASSSPSSSSIRDDLHNTT. Positions 565–577 are enriched in low complexity; it reads SCLSASSSPSSSS.

It belongs to the plant 'ANKYRIN-BTB/POZ' family. 'NPR1-like' subfamily. Forms homodimers and heterodimers with NPR4 in the presence of salicylic acid (SA). Interacts with TGA2, TGA3, TGA5 and TGA6. Interacts with CUL3A, a core component of the cullin-RING ubiquitin ligases (CRL). Interacts with TGA2 in vivo in the nucleus. Binds to NPR1; this interaction is promoted by association with SA, probably due to conformational changes.

The protein localises to the nucleus. It functions in the pathway protein modification; protein ubiquitination. Its function is as follows. Salicylic acid (SA)-binding substrate-specific adapter of an E3 ubiquitin-protein ligase complex (CUL3-RBX1-BTB) which mediates the ubiquitination and subsequent proteasomal degradation of NPR1 in response to SA. Together with NPR4, acts as receptor of salicylic acid to monitor immunity in a NPR1-dependent manner and induce systemic acquired resistance (SAR). Involved in the regulation of basal defense responses against pathogens, and may be implicated in the cross-talk between the SA- and JA-dependent signaling pathways. The chain is Regulatory protein NPR3 from Arabidopsis thaliana (Mouse-ear cress).